Here is a 164-residue protein sequence, read N- to C-terminus: Putative 4-hydroxy-4-methyl-2-oxoglutarate aldolase (164 aa).

Residues 75 to 78 (GDLI) and R97 contribute to the substrate site. D98 provides a ligand contact to a divalent metal cation.

The protein belongs to the class II aldolase/RraA-like family. In terms of assembly, homotrimer. It depends on a divalent metal cation as a cofactor.

The catalysed reaction is 4-hydroxy-4-methyl-2-oxoglutarate = 2 pyruvate. It carries out the reaction oxaloacetate + H(+) = pyruvate + CO2. Its function is as follows. Catalyzes the aldol cleavage of 4-hydroxy-4-methyl-2-oxoglutarate (HMG) into 2 molecules of pyruvate. Also contains a secondary oxaloacetate (OAA) decarboxylase activity due to the common pyruvate enolate transition state formed following C-C bond cleavage in the retro-aldol and decarboxylation reactions. This is Putative 4-hydroxy-4-methyl-2-oxoglutarate aldolase from Shewanella oneidensis (strain ATCC 700550 / JCM 31522 / CIP 106686 / LMG 19005 / NCIMB 14063 / MR-1).